The primary structure comprises 249 residues: Deoxyribose-phosphate aldolase (249 aa).

Catalysis depends on aspartate 109, which acts as the Proton donor/acceptor. Residue lysine 171 is the Schiff-base intermediate with acetaldehyde of the active site. The active-site Proton donor/acceptor is lysine 200.

The protein belongs to the DeoC/FbaB aldolase family. DeoC type 1 subfamily.

The protein localises to the cytoplasm. It carries out the reaction 2-deoxy-D-ribose 5-phosphate = D-glyceraldehyde 3-phosphate + acetaldehyde. Its pathway is carbohydrate degradation; 2-deoxy-D-ribose 1-phosphate degradation; D-glyceraldehyde 3-phosphate and acetaldehyde from 2-deoxy-alpha-D-ribose 1-phosphate: step 2/2. Functionally, catalyzes a reversible aldol reaction between acetaldehyde and D-glyceraldehyde 3-phosphate to generate 2-deoxy-D-ribose 5-phosphate. This is Deoxyribose-phosphate aldolase from Klebsiella pneumoniae subsp. pneumoniae (strain ATCC 700721 / MGH 78578).